The following is a 468-amino-acid chain: Peripherin (468 aa).

Positions 1-16 (MSHHSSGLRSSISSTS) are enriched in low complexity. The segment at 1–22 (MSHHSSGLRSSISSTSYRRTFG) is disordered. Residues 1–96 (MSHHSSGLRS…FLATRSNEKQ (96 aa)) are head. Tyrosine 17 bears the 3'-nitrotyrosine mark. Phosphoserine occurs at positions 28, 50, and 59. Residues 94–404 (EKQELQELND…KLLEGEESRI (311 aa)) form the IF rod domain. A coil 1A region spans residues 97-129 (ELQELNDRFANFIEKVRFLEQQNAALRGELSQA). Residues 130–140 (RGQEPARADQL) are linker 1. The segment at 141 to 236 (CQQELRELRR…KLHEEELRDL (96 aa)) is coil 1B. The linker 2 stretch occupies residues 237–259 (QVSVESQQVQQVEVEATVKPELT). A coil 2 region spans residues 260-402 (AALRDIRAQY…YRKLLEGEES (143 aa)). 3'-nitrotyrosine is present on tyrosine 376. Residues 403–468 (RISVPVHSFA…ELDKSSIHSY (66 aa)) are tail. The segment at 445 to 468 (GEKVVTESQKEQHSELDKSSIHSY) is disordered. Position 468 is a phosphotyrosine (tyrosine 468).

It belongs to the intermediate filament family. Forms homodimers (in vitro). Homopolymerizes into a filamentous network (in vitro). Forms heterodimers with NEFL, NEFM or NEFH (in vitro). Interacts with DST (via C-terminus). Interacts with RAB7A; the interaction is direct. Interacts with PRKCE (via phorbol-ester/DAG-type 2 domain). Phosphorylated; phosphorylation increases after nerve injury in regenerating neurons. Expressed in hypoglossal motor neurons (at protein level). Expressed in the small and large sensory neurons of the dorsal root ganglion (at protein level). Expressed in cutaneous and muscular sensory neurons.

Its subcellular location is the cytoplasm. The protein resides in the cytoskeleton. It is found in the cell projection. It localises to the axon. The protein localises to the perikaryon. Its function is as follows. Class-III neuronal intermediate filament protein. My form an independent structural network without the involvement of other neurofilaments or may cooperate with the neuronal intermediate filament proteins NEFL, NEFH, NEFM and INA to form a filamentous network. Assembly of the neuronal intermediate filaments may be regulated by RAB7A. Plays a role in the development of unmyelinated sensory neurons. May be involved in axon elongation and axon regeneration after injury. Inhibits neurite extension in type II spiral ganglion neurons in the cochlea. This chain is Peripherin (Prph), found in Rattus norvegicus (Rat).